The following is a 372-amino-acid chain: Alanine racemase (372 aa).

Lys37 serves as the catalytic Proton acceptor; specific for D-alanine. Lys37 is subject to N6-(pyridoxal phosphate)lysine. Arg136 is a substrate binding site. Residue Tyr265 is the Proton acceptor; specific for L-alanine of the active site. Met313 is a binding site for substrate.

It belongs to the alanine racemase family. Pyridoxal 5'-phosphate serves as cofactor.

It catalyses the reaction L-alanine = D-alanine. Its pathway is amino-acid biosynthesis; D-alanine biosynthesis; D-alanine from L-alanine: step 1/1. Catalyzes the interconversion of L-alanine and D-alanine. May also act on other amino acids. In Synechocystis sp. (strain ATCC 27184 / PCC 6803 / Kazusa), this protein is Alanine racemase (alr).